The primary structure comprises 414 residues: MFNNNNEYECLCILEEKLVKHLDVIDKLIENIYDNINNLNEYINKKYNEIKILASKKPTRINWMKCDDKTHMSLFFDKKIGFIPSNEDALKILDSQLMLSNYRKKYEYKKNSWTKKDIDKLFETVDITLKKYACYYLIDQNLSCDEKINKKKMIEQSEPKQIFSQIKLFFDKYNKENTHNKGNEDNVNKNINDNISKNNITHTQNCYEPIEKEQDNSNNIFSYTKNDKNIEHNFLYFSETFWNEVSEKLSNNQNAKECQKMWLYYGCFEDDKQKKWTKDEVDKLLCLSKKYEQRNWKCIARELNTNRSPLSCFEQYIKINKLYENKEKVKLERIAFNVLEDIQLQILVSIIGDKNWAEVKKHMESLNSNTSRIKKRKTNLNFFEKEKQKKFLNDEISYKRRYLRLISATNNMEQ.

3 Myb-like domains span residues 242–266, 268–320, and 328–381; these read WNEV…LYYG, FEDD…IKIN, and KVKL…TNLN.

It localises to the nucleus. In terms of biological role, transcriptional activator. Has a role in the parasite erythrocytic cycle where it directly regulates key genes involved in cell cycle regulation and progression. Binds directly to Myb regulatory elements. This Plasmodium falciparum (isolate 3D7) protein is Myb1 protein.